The following is a 478-amino-acid chain: Spindle defective protein 3 (478 aa).

At 1–24 (MDQMTVEEKILEHQELEDGSSSFR) the chain is on the cytoplasmic side. A helical membrane pass occupies residues 25–45 (WLVSSTVIAIGGATVALYISG). Residues 46–52 (KIDWKIP) are Extracellular-facing. Residues 53–73 (AIEAGLALTAGGTITCGYLWF) form a helical membrane-spanning segment. The Cytoplasmic segment spans residues 74-478 (KKRVKTVRKL…LRRVDDDIIE (405 aa)).

Its subcellular location is the mitochondrion. It localises to the mitochondrion outer membrane. Its function is as follows. In the first mitotic division in embryos, required for mitotic spindle alignment and asymmetric cell division. Required for motor-driven chromosome movement and homolog searching within the nucleus, and subsequently ensures homologous chromosome pairing during the prophase stage of meiosis. The protein is Spindle defective protein 3 of Caenorhabditis elegans.